The primary structure comprises 364 residues: DNA replication and repair protein RecF (364 aa).

Residue 30–37 participates in ATP binding; sequence GNNAQGKT.

This sequence belongs to the RecF family.

It localises to the cytoplasm. Its function is as follows. The RecF protein is involved in DNA metabolism; it is required for DNA replication and normal SOS inducibility. RecF binds preferentially to single-stranded, linear DNA. It also seems to bind ATP. The chain is DNA replication and repair protein RecF from Clostridium botulinum (strain 657 / Type Ba4).